A 187-amino-acid polypeptide reads, in one-letter code: Elongation factor P (187 aa).

It belongs to the elongation factor P family.

The protein localises to the cytoplasm. It functions in the pathway protein biosynthesis; polypeptide chain elongation. Its function is as follows. Involved in peptide bond synthesis. Stimulates efficient translation and peptide-bond synthesis on native or reconstituted 70S ribosomes in vitro. Probably functions indirectly by altering the affinity of the ribosome for aminoacyl-tRNA, thus increasing their reactivity as acceptors for peptidyl transferase. This chain is Elongation factor P, found in Corynebacterium aurimucosum (strain ATCC 700975 / DSM 44827 / CIP 107346 / CN-1) (Corynebacterium nigricans).